Consider the following 206-residue polypeptide: GTP cyclohydrolase 1 (206 aa).

Zn(2+)-binding residues include Cys-95, His-98, and Cys-166.

It belongs to the GTP cyclohydrolase I family. As to quaternary structure, toroid-shaped homodecamer, composed of two pentamers of five dimers.

The catalysed reaction is GTP + H2O = 7,8-dihydroneopterin 3'-triphosphate + formate + H(+). The protein operates within cofactor biosynthesis; 7,8-dihydroneopterin triphosphate biosynthesis; 7,8-dihydroneopterin triphosphate from GTP: step 1/1. The protein is GTP cyclohydrolase 1 of Bartonella bacilliformis (strain ATCC 35685 / KC583 / Herrer 020/F12,63).